Reading from the N-terminus, the 235-residue chain is 2-C-methyl-D-erythritol 4-phosphate cytidylyltransferase (235 aa).

This sequence belongs to the IspD/TarI cytidylyltransferase family. IspD subfamily.

It catalyses the reaction 2-C-methyl-D-erythritol 4-phosphate + CTP + H(+) = 4-CDP-2-C-methyl-D-erythritol + diphosphate. Its pathway is isoprenoid biosynthesis; isopentenyl diphosphate biosynthesis via DXP pathway; isopentenyl diphosphate from 1-deoxy-D-xylulose 5-phosphate: step 2/6. In terms of biological role, catalyzes the formation of 4-diphosphocytidyl-2-C-methyl-D-erythritol from CTP and 2-C-methyl-D-erythritol 4-phosphate (MEP). This chain is 2-C-methyl-D-erythritol 4-phosphate cytidylyltransferase, found in Pseudomonas putida (strain ATCC 47054 / DSM 6125 / CFBP 8728 / NCIMB 11950 / KT2440).